The sequence spans 2319 residues: MAARAAAAAAAAAARARARAGSGERRAPPGPRPAPGARDLEAGARGAAAAAAAPGPMLGGGGDGGGGLNSVHHHPLLPRHELNMAHNAGAAAAAGTHSAKSGGSEAALKEGGSAAALSSSSSSSAAAAAASSSSSSGPGSAMETGLLPNHKLKTVGEAPAAPPHQQHHHHHHAHHHHHHAHHLHHHHALQQQLNQFQQQQQQQQQQQQQQQQQQHPISNNNSLGGAGGGAPQPGPDMEQPQHGGAKDSAAGGQADPPGPPLLSKPGDEDDAPPKMGEPAGGRYEHPGLGALGTQQPPVAVPGGGGGPAAVPEFNNYYGSAAPASGGPGGRAGPCFDQHGGQQSPGMGMMHSASAAAAGAPGSMDPLQNSHEGYPNSQCNHYPGYSRPGAGGGGGGGGGGGGGSGGGGGGGGAGAGGAGAGAVAAAAAAAAAAAGGGGGGGYGGSSAGYGVLSSPRQQGGGMMMGPGGGGAASLSKAAAGSAAGGFQRFAGQNQHPSGATPTLNQLLTSPSPMMRSYGGSYPEYSSPSAPPPPPSQPQSQAAAAGAAAGGQQAAAGMGLGKDMGAQYAAASPAWAAAQQRSHPAMSPGTPGPTMGRSQGSPMDPMVMKRPQLYGMGSNPHSQPQQSSPYPGGSYGPPGPQRYPIGIQGRTPGAMAGMQYPQQQMPPQYGQQGVSGYCQQGQQPYYSQQPQPPHLPPQAQYLPSQSQQRYQPQQDMSQEGYGTRSQPPLAPGKPNHEDLNLIQQERPSSLPDLSGSIDDLPTGTEATLSSAVSASGSTSSQGDQSNPAQSPFSPHASPHLSSIPGGPSPSPVGSPVGSNQSRSGPISPASIPGSQMPPQPPGSQSESSSHPALSQSPMPQERGFMAGTQRNPQMAQYGPQQTGPSMSPHPSPGGQMHAGISSFQQSNSSGTYGPQMSQYGPQGNYSRPPAYSGVPSASYSGPGPGMGISANNQMHGQGPSQPCGAVPLGRMPSAGMQNRPFPGNMSSMTPSSPGMSQQGGPGMGPPMPTVNRKAQEAAAAVMQAAANSAQSRQGSFPGMNQSGLMASSSPYSQPMNNSSSLMNTQAPPYSMAPAMVNSSAASVGLADMMSPGESKLPLPLKADGKEEGTPQPESKSKKSSSSTTTGEKITKVYELGNEPERKLWVDRYLTFMEERGSPVSSLPAVGKKPLDLFRLYVCVKEIGGLAQVNKNKKWRELATNLNVGTSSSAASSLKKQYIQYLFAFECKIERGEEPPPEVFSTGDTKKQPKLQPPSPANSGSLQGPQTPQSTGSNSMAEVPGDLKPPTPASTPHGQMTPMQGGRSSTISVHDPFSDVSDSSFPKRNSMTPNAPYQQGMSMPDVMGRMPYEPNKDPFGGMRKVPGSSEPFMTQGQMPNSSMQDMYNQSPSGAMSNLGMGQRQQFPYGASYDRRHEPYGQQYPGQGPPSGQPPYGGHQPGLYPQQPNYKRHMDGMYGPPAKRHEGDMYNMQYSSQQQEMYNQYGGSYSGPDRRPIQGQYPYPYSRERMQGPGQIQTHGIPPQMMGGPLQSSSSEGPQQNMWAARNDMPYPYQNRQGPGGPTQAPPYPGMNRTDDMMVPDQRINHESQWPSHVSQRQPYMSSSASMQPITRPPQPSYQTPPSLPNHISRAPSPASFQRSLENRMSPSKSPFLPSMKMQKVMPTVPTSQVTGPPPQPPPIRREITFPPGSVEASQPVLKQRRKITSKDIVTPEAWRVMMSLKSGLLAESTWALDTINILLYDDSTVATFNLSQLSGFLELLVEYFRKCLIDIFGILMEYEVGDPSQKALDHNAARKDDSQSLADDSGKEEEDAECIDDDEEDEEDEEEDSEKTESDEKSSIALTAPDAAADPKEKPKQASKFDKLPIKIVKKNNLFVVDRSDKLGRVQEFNSGLLHWQLGGGDTTEHIQTHFESKMEIPPRRRPPPPLSSAGRKKEQEGKGDSEEQQEKSIIATIDDVLSARPGALPEDANPGPQTESSKFPFGIQQAKSHRNIKLLEDEPRSRDETPLCTIAHWQDSLAKRCICVSNIVRSLSFVPGNDAEMSKHPGLVLILGKLILLHHEHPERKRAPQTYEKEEDEDKGVACSKDEWWWDCLEVLRDNTLVTLANISGQLDLSAYTESICLPILDGLLHWMVCPSAEAQDPFPTVGPNSVLSPQRLVLETLCKLSIQDNNVDLILATPPFSRQEKFYATLVRYVGDRKNPVCREMSMALLSNLAQGDALAARAIAVQKGSIGNLISFLEDGVTMAQYQQSQHNLMHMQPPPLEPPSVDMMCRAAKALLAMARVDENRSEFLLHEGRLLDISISAVLNSLVASVICDVLFQIGQL.

Low complexity-rich tracts occupy residues M1–G21 and G43–P56. 6 disordered regions span residues M1–H74, V155–G306, A321–A414, R487–A546, Q577–T1062, and D1085–K1129. A2 bears the N-acetylalanine mark. Residues M57–L68 are compositionally biased toward gly residues. Positions Q165 to A188 are enriched in basic residues. 2 stretches are compositionally biased toward low complexity: residues L189 to H215 and S343 to M363. Over residues P365 to N379 the composition is skewed to polar residues. Residues G388–A414 are compositionally biased toward gly residues. R487 is modified (asymmetric dimethylarginine). Residues A489–S510 are compositionally biased toward polar residues. The LXXLL signature appears at L502–L506. A compositionally biased stretch (low complexity) spans P536–A546. Phosphoserine is present on residues S585 and S599. The residue at position 608 (R608) is an Asymmetric dimethylarginine. Positions S620–G630 are enriched in low complexity. Asymmetric dimethylarginine is present on R640. 6 stretches are compositionally biased toward low complexity: residues G651–Q670, Q677–Q687, P695–Q712, S767–S783, G811–S832, and G840–P849. Residues T866–T880 are compositionally biased toward polar residues. A compositionally biased stretch (low complexity) spans G881–G892. Polar residues-rich tracts occupy residues S899 to Y923 and S947 to S958. Low complexity-rich tracts occupy residues P980–S994 and E1014–Q1028. Residues S1029–T1062 show a composition bias toward polar residues. Residues E1136–E1227 enclose the ARID domain. 4 disordered regions span residues E1230–M1334, E1346–K1443, N1475–S1647, and D1782–S1852. 2 stretches are compositionally biased toward polar residues: residues A1254–M1273 and S1287–I1304. Over residues S1305–P1319 the composition is skewed to low complexity. Polar residues-rich tracts occupy residues K1320–M1334 and P1364–M1388. Low complexity predominate over residues P1426–P1440. The Nuclear localization signal motif lies at N1441–D1460. Composition is skewed to polar residues over residues L1522–M1534 and E1579–P1601. Phosphoserine is present on residues S1625, S1638, and S1642. Residues A1627–K1641 show a composition bias toward polar residues. Residues D1782 to S1791 are compositionally biased toward basic and acidic residues. A Phosphoserine modification is found at S1798. Residues G1799–E1823 show a composition bias toward acidic residues. Residues A1842–S1852 are compositionally biased toward basic and acidic residues. Position 1860 is an N6-acetyllysine (K1860). Disordered regions lie at residues F1904–K1941 and R1954–F1973. A compositionally biased stretch (basic and acidic residues) spans R1925–E1940. The short motif at L2119–L2123 is the LXXLL element.

In terms of assembly, component of SWI/SNF chromatin remodeling complexes, in some of which it can be mutually exclusive with ARID1B/BAF250B. The canonical complex contains a catalytic subunit (either SMARCA4/BRG1/BAF190A or SMARCA2/BRM/BAF190B) and at least SMARCE1, ACTL6A/BAF53, SMARCC1/BAF155, SMARCC2/BAF170, and SMARCB1/SNF5/BAF47. Other subunits specific to each of the complexes may also be present permitting several possible combinations developmentally and tissue specific. Component of the BAF (SWI/SNF-A) complex, which includes at least actin (ACTB), ARID1A/BAF250A, ARID1B/BAF250B, SMARCA2/BRM, SMARCA4/BRG1/BAF190A, ACTL6A/BAF53, ACTL6B/BAF53B, SMARCE1/BAF57, SMARCC1/BAF155, SMARCC2/BAF170, SMARCB1/SNF5/INI1, and one or more SMARCD1/BAF60A, SMARCD2/BAF60B, or SMARCD3/BAF60C. In muscle cells, the BAF complex also contains DPF3. Component of neural progenitors-specific chromatin remodeling complex (npBAF complex) composed of at least, ARID1A/BAF250A or ARID1B/BAF250B, SMARCD1/BAF60A, SMARCD3/BAF60C, SMARCA2/BRM/BAF190B, SMARCA4/BRG1/BAF190A, SMARCB1/BAF47, SMARCC1/BAF155, SMARCE1/BAF57, SMARCC2/BAF170, PHF10/BAF45A, ACTL6A/BAF53A and actin. Component of neuron-specific chromatin remodeling complex (nBAF complex) composed of at least, ARID1A/BAF250A or ARID1B/BAF250B, SMARCD1/BAF60A, SMARCD3/BAF60C, SMARCA2/BRM/BAF190B, SMARCA4/BRG1/BAF190A, SMARCB1/BAF47, SMARCC1/BAF155, SMARCE1/BAF57, SMARCC2/BAF170, DPF1/BAF45B, DPF3/BAF45C, ACTL6B/BAF53B and actin. Component of a SWI/SNF-like EBAFb complex, at least composed of SMARCA4/BRG1/BAF190A, SMARCB1/BAF47/SNF5, ACTL6A/BAF53A, SMARCE1/BAF57, SMARCD1/BAF60A, SMARCD2/BAF60B, SMARCC1/BAF155, SMARCC2/BAF170, ARID1B/BAF250B, MLLT1/ENL and actin. Interacts through its C-terminus with SMARCA2/BRM/BAF190B and SMARCA4/BRG1/BAF190A. Interacts with SMARCC1/BAF155. In terms of tissue distribution, widely expressed with high levels in heart, skeletal muscle and kidney.

Its subcellular location is the nucleus. Its function is as follows. Involved in transcriptional activation and repression of select genes by chromatin remodeling (alteration of DNA-nucleosome topology). Component of SWI/SNF chromatin remodeling complexes that carry out key enzymatic activities, changing chromatin structure by altering DNA-histone contacts within a nucleosome in an ATP-dependent manner. Belongs to the neural progenitors-specific chromatin remodeling complex (npBAF complex) and the neuron-specific chromatin remodeling complex (nBAF complex). During neural development a switch from a stem/progenitor to a postmitotic chromatin remodeling mechanism occurs as neurons exit the cell cycle and become committed to their adult state. The transition from proliferating neural stem/progenitor cells to postmitotic neurons requires a switch in subunit composition of the npBAF and nBAF complexes. As neural progenitors exit mitosis and differentiate into neurons, npBAF complexes which contain ACTL6A/BAF53A and PHF10/BAF45A, are exchanged for homologous alternative ACTL6B/BAF53B and DPF1/BAF45B or DPF3/BAF45C subunits in neuron-specific complexes (nBAF). The npBAF complex is essential for the self-renewal/proliferative capacity of the multipotent neural stem cells. The nBAF complex along with CREST plays a role regulating the activity of genes essential for dendrite growth. Binds DNA non-specifically. This is AT-rich interactive domain-containing protein 1B from Homo sapiens (Human).